The following is a 269-amino-acid chain: 4-hydroxy-tetrahydrodipicolinate reductase (269 aa).

Position 11 to 16 (11 to 16 (GPIGRM)) interacts with NAD(+). NADP(+) is bound at residue K39. Residues 101-103 (GTT) and 125-128 (ASNF) contribute to the NAD(+) site. The active-site Proton donor/acceptor is H158. A (S)-2,3,4,5-tetrahydrodipicolinate-binding site is contributed by H159. Residue K162 is the Proton donor of the active site. Residue 168–169 (GT) participates in (S)-2,3,4,5-tetrahydrodipicolinate binding.

The protein belongs to the DapB family. In terms of assembly, homotetramer.

The protein localises to the cytoplasm. The enzyme catalyses (S)-2,3,4,5-tetrahydrodipicolinate + NAD(+) + H2O = (2S,4S)-4-hydroxy-2,3,4,5-tetrahydrodipicolinate + NADH + H(+). The catalysed reaction is (S)-2,3,4,5-tetrahydrodipicolinate + NADP(+) + H2O = (2S,4S)-4-hydroxy-2,3,4,5-tetrahydrodipicolinate + NADPH + H(+). The protein operates within amino-acid biosynthesis; L-lysine biosynthesis via DAP pathway; (S)-tetrahydrodipicolinate from L-aspartate: step 4/4. In terms of biological role, catalyzes the conversion of 4-hydroxy-tetrahydrodipicolinate (HTPA) to tetrahydrodipicolinate. This chain is 4-hydroxy-tetrahydrodipicolinate reductase, found in Buchnera aphidicola subsp. Acyrthosiphon pisum (strain 5A).